The chain runs to 864 residues: MTRQLSSDGRMFASSIITVIPDSSPTAAEAIELSSPLSLPSPTSLLDFLSTSTSRGPARSDTDGDKTQGKEVLDTRPILENSFRRENRVVSGTGGKAATGKKLKRRTESPGNACQSEIHIVPGERIILRQTRPDKKAAKTKRTKKEDGLMNRKLYGRVSKANQTVSLQPETKKSAPKGCNDTTQPAENGHINDLDDGLQLEQAIQRRLDWTPTKDTTIPVIDLVGDSPSSCEKSLSGMRSTRTMLSNYEFSGIVGTLGGSRSEGTPDAPTTKRPVELLKVNNLKEISGLSDSRQSSITEDSESATSKPRRVKAKNPPKSKLTTITSYATAKYTVVEKSVDLDPVETLLSDEPGKEKNVAKRTSGARYAKPGRKKSATTEKKNEPPIFKVVPPLEAFKAFDGQELLFGTSSQLANGHSEDQHEQNEGTSHISNSSAFIPLSRSESSSKAPSQTSLGSGFLKLSSSKNLWSAGARDLTGAVLEIDEIDLSEHWMKPSIFESQPKAPLGCKADTQIPPQLGEIDFDNSCQKPLAAIDPPELVTQSETPSEKGDLHKYIVKPTHINSCSQSGSSISVGSPEKPVQDKPIFSGFTTSELAKKVAAYGFKPIKSRDKMIALLEKCWENRNKTSNSVPKLTPGDRLSQVDESTQGQSLGPHLKPNSIPQTATTQVPKVKPDKRDTKSQGVPVPSRRSTSTSKVSRKRTESPSAILVDDDQRSDSTGDSVPPSRPRRPSKSCTPRDRQKTPESFNLPTTPLTIRSGKIPSTGTASETLPSLSTQITAAIKAQPRLRAFNGVKQPTWYEKILMYDPIQLEDLAVWLNTDGFERIGEDREVCPGLVREWCESKGVCCIWRKQRGVRAHCPLVRA.

Positions Ser35–Ser54 are enriched in low complexity. 7 disordered regions span residues Ser35 to Val72, Val89 to Ala113, Lys160 to Asp193, Gly288 to Lys318, Leu348 to Asn382, Ala413 to Asn432, and Lys625 to Pro771. The span at Ala58–Val72 shows a compositional bias: basic and acidic residues. Polar residues-rich tracts occupy residues Lys160–Pro169 and Leu289–Ser306. Positions Lys307–Pro317 are enriched in basic residues. The segment covering Ser659 to Val668 has biased composition (polar residues). The span at Val683–Lys695 shows a compositional bias: low complexity. Residues Pro743–Pro771 are compositionally biased toward polar residues.

This sequence belongs to the SLX4 family. As to quaternary structure, forms a heterodimer with SLX1. In terms of processing, phosphorylated in response to DNA damage.

It is found in the nucleus. In terms of biological role, regulatory subunit of the SLX1-SLX4 structure-specific endonuclease that resolves DNA secondary structures generated during DNA repair and recombination. Has endonuclease activity towards branched DNA substrates, introducing single-strand cuts in duplex DNA close to junctions with ss-DNA. This Paracoccidioides brasiliensis (strain Pb03) protein is Structure-specific endonuclease subunit SLX4.